The primary structure comprises 2275 residues: Multifunctional protein pyrABCN (2275 aa).

The tract at residues 1-440 (MPETVGHEEP…PGPRDTEYLF (440 aa)) is GATase (Glutamine amidotransferase). Residues Ser-102, Gly-313, and Gly-315 each coordinate L-glutamine. The 189-residue stretch at 265–453 (RVLCLDVGLK…INAIKDTIAS (189 aa)) folds into the Glutamine amidotransferase type-1 domain. The active-site Nucleophile; for GATase activity is the Cys-342. 5 residues coordinate L-glutamine: Leu-343, Gln-346, Asn-384, Gly-386, and Tyr-387. Catalysis depends on for GATase activity residues His-426 and Glu-428. Residues 441 to 482 (DVFINAIKDTIASPEALQKPVNFPGGAVAENIKASPRVSVKK) form a linker region. A CPSase (Carbamoyl-phosphate synthase) region spans residues 483–1522 (VLILGSGGLS…TNVKNAKILI (1040 aa)). 12 residues coordinate ATP: Arg-600, Arg-640, Gly-646, Gly-647, Arg-677, Met-679, Glu-684, Gly-710, Ile-711, His-712, Gln-753, and Glu-767. 2 consecutive ATP-grasp domains span residues 604–796 (ARSM…KLGL) and 1139–1330 (SRML…KAMI). Mg(2+)-binding residues include Gln-753, Glu-767, and Asn-769. Mn(2+)-binding residues include Gln-753, Glu-767, and Asn-769. ATP is bound by residues Arg-1175, Lys-1214, Ile-1216, Glu-1221, Gly-1246, Val-1247, His-1248, Ser-1249, Gln-1289, and Glu-1301. The Mg(2+) site is built by Gln-1289, Glu-1301, and Asn-1303. Residues Gln-1289, Glu-1301, and Asn-1303 each contribute to the Mn(2+) site. Residues 1396–1575 (FKLPKRNILL…KDFEAVTKAS (180 aa)) enclose the MGS-like domain. Residues 1523–1532 (EAIARHYALN) form a linker region. The interval 1533 to 1862 (VQTIDYQTSH…FQGKTSCLDS (330 aa)) is defective DHOase domain. The interval 1863-1882 (EITPDAPKGSDMSGHRIVPA) is disordered. Positions 1863-1953 (EITPDAPKGS…LQMLSRSPFK (91 aa)) are linker. Positions 1954-2258 (QKHVLSVNQF…EFDMLMWMQM (305 aa)) are ATCase (Aspartate transcarbamylase). The carbamoyl phosphate site is built by Arg-2006 and Thr-2007. L-aspartate is bound at residue Lys-2034. Residues Arg-2055, His-2083, and Gln-2086 each contribute to the carbamoyl phosphate site. 2 residues coordinate L-aspartate: Arg-2116 and Arg-2178. Positions 2217 and 2218 each coordinate carbamoyl phosphate.

It in the central section; belongs to the metallo-dependent hydrolases superfamily. DHOase family. CAD subfamily. This sequence in the N-terminal section; belongs to the CarA family. In the 2nd section; belongs to the CarB family. The protein in the 3rd section; belongs to the metallo-dependent hydrolases superfamily. DHOase family. CAD subfamily. It in the C-terminal section; belongs to the aspartate/ornithine carbamoyltransferase superfamily. ATCase family. Mg(2+) is required as a cofactor. Requires Mn(2+) as cofactor.

It carries out the reaction hydrogencarbonate + L-glutamine + 2 ATP + H2O = carbamoyl phosphate + L-glutamate + 2 ADP + phosphate + 2 H(+). The catalysed reaction is L-glutamine + H2O = L-glutamate + NH4(+). It catalyses the reaction hydrogencarbonate + NH4(+) + 2 ATP = carbamoyl phosphate + 2 ADP + phosphate + 2 H(+). The enzyme catalyses carbamoyl phosphate + L-aspartate = N-carbamoyl-L-aspartate + phosphate + H(+). Its pathway is pyrimidine metabolism; UMP biosynthesis via de novo pathway; (S)-dihydroorotate from bicarbonate: step 1/3. It functions in the pathway pyrimidine metabolism; UMP biosynthesis via de novo pathway; (S)-dihydroorotate from bicarbonate: step 2/3. Functionally, multifunctional protein that encodes the first 2 enzymatic activities of the de novo pyrimidine pathway: carbamoylphosphate synthetase (CPSase; EC 6.3.5.5) and aspartate transcarbamylase (ATCase; EC 2.1.3.2). The CPSase-function is accomplished in 2 steps, by a glutamine-dependent amidotransferase activity (GATase) that binds and cleaves glutamine to produce ammonia, followed by an ammonium-dependent carbamoyl phosphate synthetase, which reacts with the ammonia, hydrogencarbonate and ATP to form carbamoyl phosphate. The endogenously produced carbamoyl phosphate is sequestered and channeled to the ATCase active site. ATCase then catalyzes the formation of carbamoyl-L-aspartate from L-aspartate and carbamoyl phosphate. In Emericella nidulans (strain FGSC A4 / ATCC 38163 / CBS 112.46 / NRRL 194 / M139) (Aspergillus nidulans), this protein is Multifunctional protein pyrABCN.